The following is a 136-amino-acid chain: Large ribosomal subunit protein bL21 (136 aa).

Residues 1–21 (MSETPSKAKASKPAESKAQAS) are compositionally biased toward low complexity. Residues 1–25 (MSETPSKAKASKPAESKAQASDSSG) form a disordered region.

It belongs to the bacterial ribosomal protein bL21 family. In terms of assembly, part of the 50S ribosomal subunit. Contacts protein L20.

Its function is as follows. This protein binds to 23S rRNA in the presence of protein L20. The protein is Large ribosomal subunit protein bL21 of Synechococcus sp. (strain RCC307).